The following is a 742-amino-acid chain: Alginate lyase (742 aa).

An N-terminal signal peptide occupies residues 1–26; that stretch reads MRLQPLFVSLALAAPCALLPTASLSA. Substrate-binding positions include Arg143, 153-156, Gln204, His208, and 263-266; these read QVLN and YYQR. Tyr264 functions as the Proton donor in the catalytic mechanism. His418 functions as the Proton acceptor in the catalytic mechanism. Zn(2+)-binding residues include His420 and Asp438. Arg443 is a substrate binding site. Residue His469 coordinates Zn(2+). Glu669 serves as a coordination point for substrate.

It belongs to the polysaccharide lyase 17 family. In terms of assembly, homodimer. Requires Zn(2+) as cofactor.

The protein localises to the periplasm. It carries out the reaction Cleavage of 4-deoxy-alpha-L-erythro-hex-4-enopyranuronoside oligosaccharides into 4-deoxy-alpha-L-erythro-hex-4-enopyranuronate monosaccharides.. In terms of biological role, polysaccharide lyase that catalyzes the depolymerization of alginate via a beta-elimination mechanism, cleaving the beta-1,4 glycosidic bond between two adjacent sugar residues. Acts specifically on alginate and each of its block structures, with highest activity toward poly-beta-D-mannuronate (poly-ManA). Shows an exolytic mode of action, producing unsaturated monomers. Displays a very low activity against poly-beta-D-glucuronate (poly-GlcA), and is not active on poly-alpha-D-galacturonate, hyaluronan, heparin, heparan sulfate and chondroitin sulfate. The protein is Alginate lyase of Stenotrophomonas maltophilia (strain K279a).